Here is an 84-residue protein sequence, read N- to C-terminus: Small ribosomal subunit protein bS20 (84 aa).

Belongs to the bacterial ribosomal protein bS20 family.

In terms of biological role, binds directly to 16S ribosomal RNA. This chain is Small ribosomal subunit protein bS20, found in Azobacteroides pseudotrichonymphae genomovar. CFP2.